The sequence spans 273 residues: Putative pyruvate, phosphate dikinase regulatory protein (273 aa).

G153 to S160 is an ADP binding site.

The protein belongs to the pyruvate, phosphate/water dikinase regulatory protein family. PDRP subfamily.

It carries out the reaction N(tele)-phospho-L-histidyl/L-threonyl-[pyruvate, phosphate dikinase] + ADP = N(tele)-phospho-L-histidyl/O-phospho-L-threonyl-[pyruvate, phosphate dikinase] + AMP + H(+). It catalyses the reaction N(tele)-phospho-L-histidyl/O-phospho-L-threonyl-[pyruvate, phosphate dikinase] + phosphate + H(+) = N(tele)-phospho-L-histidyl/L-threonyl-[pyruvate, phosphate dikinase] + diphosphate. In terms of biological role, bifunctional serine/threonine kinase and phosphorylase involved in the regulation of the pyruvate, phosphate dikinase (PPDK) by catalyzing its phosphorylation/dephosphorylation. The polypeptide is Putative pyruvate, phosphate dikinase regulatory protein (Ehrlichia ruminantium (strain Welgevonden)).